Reading from the N-terminus, the 115-residue chain is Large ribosomal subunit protein bL20 (115 aa).

This sequence belongs to the bacterial ribosomal protein bL20 family.

In terms of biological role, binds directly to 23S ribosomal RNA and is necessary for the in vitro assembly process of the 50S ribosomal subunit. It is not involved in the protein synthesizing functions of that subunit. The sequence is that of Large ribosomal subunit protein bL20 from Borrelia hermsii (strain HS1 / DAH).